Here is a 640-residue protein sequence, read N- to C-terminus: 1-deoxy-D-xylulose-5-phosphate synthase (640 aa).

Thiamine diphosphate-binding positions include His-78 and 119 to 121 (GHS). Residue Asp-151 participates in Mg(2+) binding. Thiamine diphosphate contacts are provided by residues 152-153 (GA), Asn-180, Tyr-289, and Glu-371. Asn-180 contacts Mg(2+).

It belongs to the transketolase family. DXPS subfamily. In terms of assembly, homodimer. The cofactor is Mg(2+). Thiamine diphosphate serves as cofactor.

It catalyses the reaction D-glyceraldehyde 3-phosphate + pyruvate + H(+) = 1-deoxy-D-xylulose 5-phosphate + CO2. Its pathway is metabolic intermediate biosynthesis; 1-deoxy-D-xylulose 5-phosphate biosynthesis; 1-deoxy-D-xylulose 5-phosphate from D-glyceraldehyde 3-phosphate and pyruvate: step 1/1. Catalyzes the acyloin condensation reaction between C atoms 2 and 3 of pyruvate and glyceraldehyde 3-phosphate to yield 1-deoxy-D-xylulose-5-phosphate (DXP). The sequence is that of 1-deoxy-D-xylulose-5-phosphate synthase from Bartonella henselae (strain ATCC 49882 / DSM 28221 / CCUG 30454 / Houston 1) (Rochalimaea henselae).